Here is a 365-residue protein sequence, read N- to C-terminus: Aminomethyltransferase (365 aa).

It belongs to the GcvT family. In terms of assembly, the glycine cleavage system is composed of four proteins: P, T, L and H.

The enzyme catalyses N(6)-[(R)-S(8)-aminomethyldihydrolipoyl]-L-lysyl-[protein] + (6S)-5,6,7,8-tetrahydrofolate = N(6)-[(R)-dihydrolipoyl]-L-lysyl-[protein] + (6R)-5,10-methylene-5,6,7,8-tetrahydrofolate + NH4(+). In terms of biological role, the glycine cleavage system catalyzes the degradation of glycine. The polypeptide is Aminomethyltransferase (Chlorobium phaeobacteroides (strain DSM 266 / SMG 266 / 2430)).